The following is a 291-amino-acid chain: Small ribosomal subunit biogenesis GTPase RsgA (291 aa).

The region spanning 63–221 is the CP-type G domain; it reads QNELKRPPVS…VADTPGFSAL (159 aa). GTP is bound by residues 112 to 115 and 164 to 172; these read TKKD and GQSGVGKST. Zn(2+) is bound by residues Cys245, Cys250, His252, and Cys258.

Belongs to the TRAFAC class YlqF/YawG GTPase family. RsgA subfamily. Monomer. Associates with 30S ribosomal subunit, binds 16S rRNA. The cofactor is Zn(2+).

Its subcellular location is the cytoplasm. In terms of biological role, one of several proteins that assist in the late maturation steps of the functional core of the 30S ribosomal subunit. Helps release RbfA from mature subunits. May play a role in the assembly of ribosomal proteins into the subunit. Circularly permuted GTPase that catalyzes slow GTP hydrolysis, GTPase activity is stimulated by the 30S ribosomal subunit. In Staphylococcus carnosus (strain TM300), this protein is Small ribosomal subunit biogenesis GTPase RsgA.